Consider the following 437-residue polypeptide: Probable D-serine dehydratase (437 aa).

Lys-106 is subject to N6-(pyridoxal phosphate)lysine.

Belongs to the serine/threonine dehydratase family. DsdA subfamily. Requires pyridoxal 5'-phosphate as cofactor.

It catalyses the reaction D-serine = pyruvate + NH4(+). This Hahella chejuensis (strain KCTC 2396) protein is Probable D-serine dehydratase.